A 101-amino-acid chain; its full sequence is MAKLALIEREKKRAKLVAKYAAKRANLKAIIDDQEKSEEERYSARLELQQLPRNANPTRQRNRCAITGRPRGTFRKFGLARNKIREIAFKGEIPGLTKASW.

Belongs to the universal ribosomal protein uS14 family. As to quaternary structure, part of the 30S ribosomal subunit. Contacts proteins S3 and S10.

Binds 16S rRNA, required for the assembly of 30S particles and may also be responsible for determining the conformation of the 16S rRNA at the A site. In Cupriavidus necator (strain ATCC 17699 / DSM 428 / KCTC 22496 / NCIMB 10442 / H16 / Stanier 337) (Ralstonia eutropha), this protein is Small ribosomal subunit protein uS14.